We begin with the raw amino-acid sequence, 796 residues long: Leucine--tRNA ligase (796 aa).

Positions 40–51 (PYPSASGLHVGH) match the 'HIGH' region motif. Positions 569 to 573 (KMSKS) match the 'KMSKS' region motif. Residue Lys572 coordinates ATP.

Belongs to the class-I aminoacyl-tRNA synthetase family.

It is found in the cytoplasm. The catalysed reaction is tRNA(Leu) + L-leucine + ATP = L-leucyl-tRNA(Leu) + AMP + diphosphate. The sequence is that of Leucine--tRNA ligase from Bdellovibrio bacteriovorus (strain ATCC 15356 / DSM 50701 / NCIMB 9529 / HD100).